Consider the following 119-residue polypeptide: Large ribosomal subunit protein uL22 (119 aa).

It belongs to the universal ribosomal protein uL22 family. Part of the 50S ribosomal subunit.

This protein binds specifically to 23S rRNA; its binding is stimulated by other ribosomal proteins, e.g. L4, L17, and L20. It is important during the early stages of 50S assembly. It makes multiple contacts with different domains of the 23S rRNA in the assembled 50S subunit and ribosome. Functionally, the globular domain of the protein is located near the polypeptide exit tunnel on the outside of the subunit, while an extended beta-hairpin is found that lines the wall of the exit tunnel in the center of the 70S ribosome. The protein is Large ribosomal subunit protein uL22 of Chlorobium phaeobacteroides (strain DSM 266 / SMG 266 / 2430).